A 119-amino-acid chain; its full sequence is Large ribosomal subunit protein uL18 (119 aa).

It belongs to the universal ribosomal protein uL18 family. As to quaternary structure, part of the 50S ribosomal subunit; part of the 5S rRNA/L5/L18/L25 subcomplex. Contacts the 5S and 23S rRNAs.

In terms of biological role, this is one of the proteins that bind and probably mediate the attachment of the 5S RNA into the large ribosomal subunit, where it forms part of the central protuberance. The protein is Large ribosomal subunit protein uL18 of Anaeromyxobacter dehalogenans (strain 2CP-1 / ATCC BAA-258).